The primary structure comprises 260 residues: Hemin import ATP-binding protein HmuV (260 aa).

The 238-residue stretch at 2 to 239 folds into the ABC transporter domain; that stretch reads IRAENITLIR…ETIARVYGIG (238 aa). Residue 34–41 participates in ATP binding; that stretch reads GPNGAGKS.

It belongs to the ABC transporter superfamily. Heme (hemin) importer (TC 3.A.1.14.5) family. The complex is composed of two ATP-binding proteins (HmuV), two transmembrane proteins (HmuU) and a solute-binding protein (HmuT).

The protein resides in the cell inner membrane. Functionally, part of the ABC transporter complex HmuTUV involved in hemin import. Responsible for energy coupling to the transport system. The chain is Hemin import ATP-binding protein HmuV from Agrobacterium fabrum (strain C58 / ATCC 33970) (Agrobacterium tumefaciens (strain C58)).